The chain runs to 369 residues: Beta-1,4-galactosyltransferase 2 (369 aa).

Topologically, residues 1–15 (MSRLLGGTLERVCKA) are cytoplasmic. A helical; Signal-anchor for type II membrane protein transmembrane segment spans residues 16 to 36 (VLLLCLLHFLVAVILYFDVYA). Topologically, residues 37–369 (QHLAFFSRFS…GQPMSWLTQG (333 aa)) are lumenal. Residues 58-73 (ASSSTNCSRPNATAAS) are compositionally biased toward polar residues. A disordered region spans residues 58 to 90 (ASSSTNCSRPNATAASSGLPEVPSARPGPTAPV). Asn63 and Asn68 each carry an N-linked (GlcNAc...) asparagine glycan. Residues Cys94 and Cys136 are joined by a disulfide bond. UDP-alpha-D-galactose-binding positions include 147–151 (PFRHR), 186–188 (FNR), 214–215 (VD), and Trp275. Cys208 and Cys227 are oxidised to a cystine. Asp215 is a binding site for Mn(2+). 277 to 280 (GEDD) lines the N-acetyl-D-glucosamine pocket. His308 contributes to the Mn(2+) binding site. 308 to 310 (HDR) contacts UDP-alpha-D-galactose. N-acetyl-D-glucosamine is bound at residue Arg320. Asn354 is a glycosylation site (N-linked (GlcNAc...) asparagine).

The protein belongs to the glycosyltransferase 7 family. The cofactor is Mn(2+).

The protein resides in the golgi apparatus. The protein localises to the golgi stack membrane. The enzyme catalyses D-glucose + UDP-alpha-D-galactose = lactose + UDP + H(+). The catalysed reaction is an N-acetyl-beta-D-glucosaminyl derivative + UDP-alpha-D-galactose = a beta-D-galactosyl-(1-&gt;4)-N-acetyl-beta-D-glucosaminyl derivative + UDP + H(+). It carries out the reaction N-acetyl-D-glucosamine + UDP-alpha-D-galactose = beta-D-galactosyl-(1-&gt;4)-N-acetyl-D-glucosamine + UDP + H(+). It participates in protein modification; protein glycosylation. Its function is as follows. Responsible for the synthesis of complex-type N-linked oligosaccharides in many glycoproteins as well as the carbohydrate moieties of glycolipids. Can produce lactose. This Mus musculus (Mouse) protein is Beta-1,4-galactosyltransferase 2.